The primary structure comprises 266 residues: Diphthine synthase (266 aa).

S-adenosyl-L-methionine contacts are provided by residues Leu-9, Asp-84, Val-87, 112–113 (SI), Leu-169, Ala-210, and His-235.

It belongs to the diphthine synthase family. In terms of assembly, homodimer.

The enzyme catalyses 2-[(3S)-amino-3-carboxypropyl]-L-histidyl-[translation elongation factor 2] + 3 S-adenosyl-L-methionine = diphthine-[translation elongation factor 2] + 3 S-adenosyl-L-homocysteine + 3 H(+). It functions in the pathway protein modification; peptidyl-diphthamide biosynthesis. Its function is as follows. S-adenosyl-L-methionine-dependent methyltransferase that catalyzes the trimethylation of the amino group of the modified target histidine residue in translation elongation factor 2 (EF-2), to form an intermediate called diphthine. The three successive methylation reactions represent the second step of diphthamide biosynthesis. The sequence is that of Diphthine synthase from Methanosarcina acetivorans (strain ATCC 35395 / DSM 2834 / JCM 12185 / C2A).